Reading from the N-terminus, the 150-residue chain is MVLCFPLLLLLLVLWGPVCPLHAWPKRLTKAHWFEIQHIQPSPLQCNRAMSGINNYAQHCKHQNTFLHDSFQNVAAVCDLLSIVCKNRRHNCHQSSKPVNMTDCRLTSGKYPQCRYSAAAQYKFFIVACDPPQKSDPPYKLVPVHLDSIL.

The first 23 residues, 1 to 23, serve as a signal peptide directing secretion; sequence MVLCFPLLLLLLVLWGPVCPLHA. His38 acts as the Proton acceptor in catalysis. 4 disulfides stabilise this stretch: Cys46–Cys104, Cys60–Cys114, Cys78–Cys129, and Cys85–Cys92. Residues 61–65 and Lys86 each bind substrate; that span reads KHQNT. An N-linked (GlcNAc...) asparagine glycan is attached at Asn100. Substrate is bound at residue Arg105. His145 functions as the Proton donor in the catalytic mechanism.

It belongs to the pancreatic ribonuclease family. As to quaternary structure, interacts (via N-terminus) with bacterial lipopolysaccharide (LPS).

The protein resides in the secreted. It is found in the lysosome. The protein localises to the cytoplasmic granule. Ribonuclease which shows a preference for the pyrimidines uridine and cytosine. Has potent antibacterial activity against a range of Gram-positive and Gram-negative bacteria, including P.aeruginosa, A.baumanii, M.luteus, S.aureus, E.faecalis, E.faecium, S.saprophyticus and E.coli. Causes loss of bacterial membrane integrity, and also promotes agglutination of Gram-negative bacteria. Probably contributes to urinary tract sterility. Bactericidal activity is independent of RNase activity. This chain is Ribonuclease K6 (RNASE6), found in Pan troglodytes (Chimpanzee).